A 255-amino-acid chain; its full sequence is Imidazole glycerol phosphate synthase subunit HisF (255 aa).

Active-site residues include Asp12 and Asp131.

Belongs to the HisA/HisF family. Heterodimer of HisH and HisF.

It localises to the cytoplasm. The enzyme catalyses 5-[(5-phospho-1-deoxy-D-ribulos-1-ylimino)methylamino]-1-(5-phospho-beta-D-ribosyl)imidazole-4-carboxamide + L-glutamine = D-erythro-1-(imidazol-4-yl)glycerol 3-phosphate + 5-amino-1-(5-phospho-beta-D-ribosyl)imidazole-4-carboxamide + L-glutamate + H(+). Its pathway is amino-acid biosynthesis; L-histidine biosynthesis; L-histidine from 5-phospho-alpha-D-ribose 1-diphosphate: step 5/9. Its function is as follows. IGPS catalyzes the conversion of PRFAR and glutamine to IGP, AICAR and glutamate. The HisF subunit catalyzes the cyclization activity that produces IGP and AICAR from PRFAR using the ammonia provided by the HisH subunit. The polypeptide is Imidazole glycerol phosphate synthase subunit HisF (Ruthia magnifica subsp. Calyptogena magnifica).